A 267-amino-acid chain; its full sequence is Tryptophan synthase alpha chain (267 aa).

Residues glutamate 49 and aspartate 60 each act as proton acceptor in the active site.

This sequence belongs to the TrpA family. Tetramer of two alpha and two beta chains.

The enzyme catalyses (1S,2R)-1-C-(indol-3-yl)glycerol 3-phosphate + L-serine = D-glyceraldehyde 3-phosphate + L-tryptophan + H2O. Its pathway is amino-acid biosynthesis; L-tryptophan biosynthesis; L-tryptophan from chorismate: step 5/5. In terms of biological role, the alpha subunit is responsible for the aldol cleavage of indoleglycerol phosphate to indole and glyceraldehyde 3-phosphate. This is Tryptophan synthase alpha chain from Acaryochloris marina (strain MBIC 11017).